Here is a 193-residue protein sequence, read N- to C-terminus: Ion-translocating oxidoreductase complex subunit A (193 aa).

6 helical membrane-spanning segments follow: residues 4–24, 39–59, 71–91, 102–122, 134–154, and 167–187; these read FFFILLSTALVNNVVLVKFLG, IGMGLATTFVLTLAAGASWMV, FLRILSLILVIAAIVQFIEVV, ALGIYLPLITTNCAVLGVALL, LLYGFGSASGFTLVLVIFAGM, and FAGAPIAFISAGLLSMAFMGF.

It belongs to the NqrDE/RnfAE family. In terms of assembly, the complex is composed of six subunits: RnfA, RnfB, RnfC, RnfD, RnfE and RnfG.

The protein localises to the cellular chromatophore membrane. In terms of biological role, part of a membrane-bound complex that couples electron transfer with translocation of ions across the membrane. This Cereibacter sphaeroides (strain ATCC 17029 / ATH 2.4.9) (Rhodobacter sphaeroides) protein is Ion-translocating oxidoreductase complex subunit A.